The sequence spans 957 residues: Glycine dehydrogenase (decarboxylating) (957 aa).

Position 708 is an N6-(pyridoxal phosphate)lysine (Lys708).

It belongs to the GcvP family. The glycine cleavage system is composed of four proteins: P, T, L and H. Pyridoxal 5'-phosphate serves as cofactor.

The enzyme catalyses N(6)-[(R)-lipoyl]-L-lysyl-[glycine-cleavage complex H protein] + glycine + H(+) = N(6)-[(R)-S(8)-aminomethyldihydrolipoyl]-L-lysyl-[glycine-cleavage complex H protein] + CO2. Its function is as follows. The glycine cleavage system catalyzes the degradation of glycine. The P protein binds the alpha-amino group of glycine through its pyridoxal phosphate cofactor; CO(2) is released and the remaining methylamine moiety is then transferred to the lipoamide cofactor of the H protein. This Shigella flexneri protein is Glycine dehydrogenase (decarboxylating).